Reading from the N-terminus, the 558-residue chain is Coiled-coil domain-containing protein 63 (558 aa).

The segment at 1 to 26 is disordered; it reads MPTKKHRRKDPESPQEPSEKTKEQLV. Basic and acidic residues predominate over residues 9–26; it reads KDPESPQEPSEKTKEQLV. Coiled-coil stretches lie at residues 48–289 and 339–416; these read NFRS…KAKK and VTEL…VENL. Residues 531–558 form a disordered region; that stretch reads HYATRESRNRDSMPEKGDELKSKKKVTV. Over residues 533–551 the composition is skewed to basic and acidic residues; that stretch reads ATRESRNRDSMPEKGDELK.

Plays a role in spermiogenesis. Involved in the elongation of flagella and the formation of sperm heads. The sequence is that of Coiled-coil domain-containing protein 63 from Bos taurus (Bovine).